A 722-amino-acid chain; its full sequence is Polyribonucleotide nucleotidyltransferase (722 aa).

Residues Asp486 and Asp492 each contribute to the Mg(2+) site. The region spanning 553–612 (PKIVQLQIDIDKISLVIGSTGKTVKAITDEFEVKVQIEQNGKIILFGDDDFKMQKAKERI) is the KH domain. One can recognise an S1 motif domain in the interval 622–717 (GEIYEGTVKK…KFGKIDLEIV (96 aa)).

It belongs to the polyribonucleotide nucleotidyltransferase family. Mg(2+) serves as cofactor.

It is found in the cytoplasm. The catalysed reaction is RNA(n+1) + phosphate = RNA(n) + a ribonucleoside 5'-diphosphate. Its function is as follows. Involved in mRNA degradation. Catalyzes the phosphorolysis of single-stranded polyribonucleotides processively in the 3'- to 5'-direction. The protein is Polyribonucleotide nucleotidyltransferase of Borreliella burgdorferi (strain ZS7) (Borrelia burgdorferi).